The following is a 157-amino-acid chain: Endoribonuclease YbeY (157 aa).

Zn(2+) contacts are provided by H116, H120, and H126.

The protein belongs to the endoribonuclease YbeY family. The cofactor is Zn(2+).

The protein resides in the cytoplasm. Single strand-specific metallo-endoribonuclease involved in late-stage 70S ribosome quality control and in maturation of the 3' terminus of the 16S rRNA. In Arthrobacter sp. (strain FB24), this protein is Endoribonuclease YbeY.